The primary structure comprises 257 residues: UPF0246 protein RHOS4_29700 (257 aa).

Belongs to the UPF0246 family.

The chain is UPF0246 protein RHOS4_29700 from Cereibacter sphaeroides (strain ATCC 17023 / DSM 158 / JCM 6121 / CCUG 31486 / LMG 2827 / NBRC 12203 / NCIMB 8253 / ATH 2.4.1.) (Rhodobacter sphaeroides).